The primary structure comprises 322 residues: MYNRYVLSRRRTGFGDCLWSLAAAWRYAQRTARTLAVDWRGSCYLDQPFTNAFPVFFEPIKDIAGVPFICDNRVNEFSFPGPFFPNWWNKPAIECVYRPDAQVFRERDELDELFQAQDDVEANTVVCDACLMWRCDEEAERQIFCSVKPRAEIQARIDAIYQEHFYGYSAIGVHVRHGNGEDVMDHAPYWADPDLAVHQVCTAINAAKALPHPKPVRVILCTDSARVLDQVSSRFPDLLTIPKSFRADQSGPLHSADLGVEGGISALVEMYLLGLCDTVIRFPPTSAFTRYARLSVPRVIEFDLNDPSRLVVIERSSTNTAS.

The 314-residue stretch at 1–314 (MYNRYVLSRR…NDPSRLVVIE (314 aa)) folds into the GT23 domain.

This sequence belongs to the glycosyltransferase 23 family.

Its function is as follows. Fucosyltransferase which adds the fucose moiety of the nod factor on its terminal reducing N-acetylglucosamine end. Uses GDP-fucose as the donor group. The polypeptide is Nodulation protein Z (nodZ) (Sinorhizobium fredii (strain NBRC 101917 / NGR234)).